Reading from the N-terminus, the 1505-residue chain is Probable serine/threonine-protein kinase DDB_G0280133 (1505 aa).

PAS domains lie at 2 to 72 (NTHN…FETG), 108 to 178 (RMFI…YHGG), and 215 to 284 (DMFK…TDSH). 2 disordered regions span residues 282 to 348 (DSHD…FNHS) and 398 to 533 (RVYG…ESSY). Low complexity-rich tracts occupy residues 289 to 314 (QQQQ…TTST) and 328 to 344 (SSPP…TPTT). Basic and acidic residues-rich tracts occupy residues 398–407 (RVYGKDKDKN) and 415–430 (ENKD…ESKE). Residues 431-443 (HRHSKEKKKRKKD) show a composition bias toward basic residues. Over residues 448 to 468 (NNNNNNNNNNNNNNEQTSDSS) the composition is skewed to low complexity. A compositionally biased stretch (basic residues) spans 479-489 (SKKKRSSKKKS). Low complexity predominate over residues 515–532 (SSNSSSNSSHSNAPHESS). In terms of domain architecture, Protein kinase spans 542 to 805 (YTLGKTLGRG…IMNVLNHPWL (264 aa)). ATP-binding positions include 548–556 (LGRGNYGVV) and Lys-571. Residue Asp-684 is the Proton acceptor of the active site. Residues 855–960 (NILNNNNNNN…NNTNSIINNN (106 aa)) show a composition bias toward low complexity. Disordered stretches follow at residues 855–1048 (NILN…SHQQ), 1072–1091 (QPNQ…QLQQ), and 1181–1358 (QQQQ…DEEN). Residues 903 to 939 (NNNNNINNNINNNNNVNNNVNNNKNNNNNNNNNSNNN) are a coiled coil. A compositionally biased stretch (polar residues) spans 961–974 (LYNQSLSPQNNNIY). Composition is skewed to low complexity over residues 975-1013 (QHSP…QQQH) and 1022-1048 (QQHQ…SHQQ). A compositionally biased stretch (polar residues) spans 1072 to 1082 (QPNQQVSFDTN). A coiled-coil region spans residues 1125–1189 (IQQIQQLQQQ…QQQQQQQQND (65 aa)). Basic and acidic residues predominate over residues 1202–1271 (SKRDNSYNKR…NSRDNNRYNN (70 aa)). Residues 1272 to 1282 (RDNNNNNNSNN) show a composition bias toward low complexity. Basic and acidic residues-rich tracts occupy residues 1283-1301 (NRER…DYGK) and 1313-1326 (NKDK…KPDF). Positions 1331 to 1347 (SLKNDSSSNYGTISSGR) are enriched in polar residues. The FHA domain occupies 1399-1463 (FLFGRNRDIA…NGTFLKGEKI (65 aa)).

The protein belongs to the protein kinase superfamily. CAMK Ser/Thr protein kinase family. SNF1 subfamily.

The catalysed reaction is L-seryl-[protein] + ATP = O-phospho-L-seryl-[protein] + ADP + H(+). It carries out the reaction L-threonyl-[protein] + ATP = O-phospho-L-threonyl-[protein] + ADP + H(+). In Dictyostelium discoideum (Social amoeba), this protein is Probable serine/threonine-protein kinase DDB_G0280133.